The following is a 399-amino-acid chain: Zinc finger HIT domain-containing protein 2 (399 aa).

Methionine 1 carries the post-translational modification N-acetylmethionine. Residues cysteine 7, cysteine 10, cysteine 22, cysteine 25, cysteine 30, cysteine 34, histidine 38, and cysteine 41 each contribute to the Zn(2+) site. Residues 7 to 41 (CGFCPAGEALPARYTCPRCNAPYCSLRCYRAHGAC) form an HIT-type zinc finger. 2 disordered regions span residues 70-97 (RLRE…GLSG) and 152-175 (AEPE…AEPF). The segment covering 86–96 (LGPGARPGGLS) has biased composition (gly residues). Position 161 is a phosphothreonine (threonine 161).

As to quaternary structure, interacts (via HIT-type zinc finger) with RUVBL2 in the presence of ATP or ADP; shows a stronger interaction in the presence of ADP. In terms of tissue distribution, low expression in most tissues; highly expressed in testis; particularly in seminiferous tubules.

Functionally, may act as a bridging factor mediating the interaction between the R2TP/Prefoldin-like (R2TP/PFDL) complex and U5 small nuclear ribonucleoprotein (U5 snRNP). Required for the interaction of R2TP complex subunit RPAP3 and prefoldin-like subunit URI1 with U5 snRNP proteins EFTUD2 and PRPF8. May play a role in regulating the composition of the U5 snRNP complex. This Mus musculus (Mouse) protein is Zinc finger HIT domain-containing protein 2 (Znhit2).